The following is a 347-amino-acid chain: 3-isopropylmalate dehydrogenase (347 aa).

Substrate contacts are provided by R95, R105, R129, and D220. Residues D220, D244, and D248 each contribute to the Mg(2+) site. Residue 280-292 (GSAPDIAGQGKAD) participates in NAD(+) binding.

Belongs to the isocitrate and isopropylmalate dehydrogenases family. LeuB type 2 subfamily. As to quaternary structure, homodimer. It depends on Mg(2+) as a cofactor. Mn(2+) serves as cofactor.

The protein localises to the cytoplasm. It catalyses the reaction (2R,3S)-3-isopropylmalate + NAD(+) = 4-methyl-2-oxopentanoate + CO2 + NADH. The protein operates within amino-acid biosynthesis; L-leucine biosynthesis; L-leucine from 3-methyl-2-oxobutanoate: step 3/4. Functionally, catalyzes the oxidation of 3-carboxy-2-hydroxy-4-methylpentanoate (3-isopropylmalate) to 3-carboxy-4-methyl-2-oxopentanoate. The product decarboxylates to 4-methyl-2 oxopentanoate. In Beutenbergia cavernae (strain ATCC BAA-8 / DSM 12333 / CCUG 43141 / JCM 11478 / NBRC 16432 / NCIMB 13614 / HKI 0122), this protein is 3-isopropylmalate dehydrogenase.